The sequence spans 333 residues: Olfactory receptor 1078 (333 aa).

At 1-25 (MDSSNRTRVSEFLLLGFVENKDLQP) the chain is on the extracellular side. A glycan (N-linked (GlcNAc...) asparagine) is linked at asparagine 5. The chain crosses the membrane as a helical span at residues 26-50 (LIYGLFLSMYLVTVIGNISIIVAII). Over 51–57 (SDPCLHT) the chain is Cytoplasmic. The chain crosses the membrane as a helical span at residues 58–79 (PMYFFLSNLSFVDICFISTTVP). Over 80–100 (KMLVNIQTQNNVITYAGCITQ) the chain is Extracellular. The cysteines at positions 97 and 189 are disulfide-linked. A helical membrane pass occupies residues 101–120 (IYFFLLFVELDNFLLTIMAY). The Cytoplasmic portion of the chain corresponds to 121–139 (DRYVAICHPMHYTVIMNYK). The helical transmembrane segment at 140-158 (LCGFLVLVSWIVSVLHALF) threads the bilayer. Topologically, residues 159-196 (QSLMMLALPFCTHLEIPHYFCEPNQVIQLTCSDAFLND) are extracellular. The chain crosses the membrane as a helical span at residues 197–219 (LVIYFTLVLLATVPLAGIFYSYF). The Cytoplasmic portion of the chain corresponds to 220–236 (KIVSSICAISSVHGKYK). Residues 237–260 (AFSTCASHLSVVSLFYCTGLGVYL) traverse the membrane as a helical segment. Residues 261-272 (SSAANNSSQASA) lie on the Extracellular side of the membrane. The chain crosses the membrane as a helical span at residues 273 to 292 (TASVMYTVVTPMVNPFIYSL). The Cytoplasmic portion of the chain corresponds to 293–333 (RNKDVKSVLKKTLCEEVIRSPPSLLHFFLVLCHLPCFIFCY).

Belongs to the G-protein coupled receptor 1 family. As to expression, olfactory epithelium.

It localises to the cell membrane. Functionally, odorant receptor. This Rattus norvegicus (Rat) protein is Olfactory receptor 1078 (Olr1078).